The following is a 451-amino-acid chain: Trigger factor (451 aa).

The region spanning 165-250 (DDKLTIDFEG…LHQIQAREVL (86 aa)) is the PPIase FKBP-type domain.

The protein belongs to the FKBP-type PPIase family. Tig subfamily.

It localises to the cytoplasm. The catalysed reaction is [protein]-peptidylproline (omega=180) = [protein]-peptidylproline (omega=0). Involved in protein export. Acts as a chaperone by maintaining the newly synthesized protein in an open conformation. Functions as a peptidyl-prolyl cis-trans isomerase. This is Trigger factor from Helicobacter acinonychis (strain Sheeba).